The sequence spans 138 residues: Lymphocyte antigen 6L (138 aa).

The signal sequence occupies residues 1-16 (MERLVLTLCTLPLAVA). N-linked (GlcNAc...) asparagine glycosylation occurs at Asn-27. Residues 28–122 (LSCYQCFKVS…TPQEGRWALR (95 aa)) form the UPAR/Ly6 domain. 2 disulfides stabilise this stretch: Cys-30-Cys-47 and Cys-103-Cys-108. A lipid anchor (GPI-anchor amidated glycine) is attached at Gly-117. The propeptide at 118 to 138 (RWALRGGLLLQVGLSLLRALL) is removed in mature form.

The protein localises to the cell membrane. This Homo sapiens (Human) protein is Lymphocyte antigen 6L.